A 491-amino-acid chain; its full sequence is Tyrosine 3-monooxygenase (491 aa).

At Ser19 the chain carries Phosphoserine; by CaMK2. Residue Ser31 is modified to Phosphoserine. A Phosphoserine; by CaMK2 and PKA modification is found at Ser40. The Fe cation site is built by His324, His329, and Glu369. At Ser465 the chain carries Phosphoserine.

This sequence belongs to the biopterin-dependent aromatic amino acid hydroxylase family. As to quaternary structure, homotetramer. Interacts (when phosphorylated at Ser-19) with YWHAG; one YWHAG dimer bounds to one TH tetramer and this interaction may influence the phosphorylation and dephosphorylation of other sites. Interacts with NT5DC2; the interaction results in reduced phosphorylation and decreased catalytic activity of TH. It depends on Fe(2+) as a cofactor. Phosphorylated on Ser-19, Ser-31 and Ser-40 by several protein kinases with different site specificities. Phosphorylation at Ser-31 and Ser-40 leads to an increase of TH activity. Phosphorylation at Ser-40 activates the enzyme and also counteracts the feedback inhibition of TH by catecholamines. Phosphorylation of Ser-19 and Ser-31 triggers the proteasomal degradation of TH through the ubiquitin-proteasome pathway. Phosphorylation at Ser-31 facilitates transport of TH from the soma to the nerve terminals via the microtubule network. Phosphorylation at Ser-19 induces the high-affinity binding to the 14-3-3 protein YWHAG; this interaction may influence the phosphorylation and dephosphorylation of other sites. Ser-19 increases the phosphorylation at Ser-40 in a hierarchical manner, leading to increased activity.

It is found in the cytoplasm. It localises to the perinuclear region. Its subcellular location is the nucleus. The protein localises to the cell projection. The protein resides in the axon. It is found in the cytoplasmic vesicle. It localises to the secretory vesicle. Its subcellular location is the synaptic vesicle. The enzyme catalyses (6R)-L-erythro-5,6,7,8-tetrahydrobiopterin + L-tyrosine + O2 = (4aS,6R)-4a-hydroxy-L-erythro-5,6,7,8-tetrahydrobiopterin + L-dopa. The protein operates within catecholamine biosynthesis; dopamine biosynthesis; dopamine from L-tyrosine: step 1/2. Inhibited in feedback fashion by the catecholamine neurotransmitters, especially by dopamine in competition with tetrahydrobiopterin. Phosphorylation of several Ser/Thr residues in the N-terminus regulates the catalytic activity. Ser-31 and Ser-40 are readily phosphorylated to activate the catalytic activity. A Cysteine modification induced by N-ethylmaleimide (NEM), inhibits tyrosine 3-monooxygenase activity through the modification of the Cys-170. In terms of biological role, catalyzes the conversion of L-tyrosine to L-dihydroxyphenylalanine (L-Dopa), the rate-limiting step in the biosynthesis of catecholamines, dopamine, noradrenaline, and adrenaline. Uses tetrahydrobiopterin and molecular oxygen to convert tyrosine to L-Dopa. In addition to tyrosine, is able to catalyze the hydroxylation of phenylalanine and tryptophan with lower specificity. Positively regulates the regression of retinal hyaloid vessels during postnatal development. This is Tyrosine 3-monooxygenase (TH) from Bos taurus (Bovine).